We begin with the raw amino-acid sequence, 486 residues long: MFDNEEGQGPKSTFTTYMAEGDQLFQRGEYVKAVESFTTALTLQPDDKNCLVSRSRCYVKLGDAENALKDAESSLKDNKNYFKGLYQKAEALYTMGDFEFALVYYHRGHKLRPELQEFRLGIQKAQEAIDNSVGSPSSVKLVNKGDLSFFHNGVHPQNLNPSNKKESKKHSKKTDKGEKTAKQLLGELYSDREYLKKLLQDEDLVKCKIRSGERVQDLIVGSISYLDTRMAFWQQQKPIYARQRDRKLMQQQWSKVLHKPPSDPTRYVLSSLEEIDTALSAGYTESGLNKARELMKVVKDWSEDALPNKNEVLGNLHSYIGNALMDLGNMDRALHHHEKDLELAKKCDLTDSKSRALDNIGRVYARIGKFQQAIEVWEKKLPLACGGLEKAWLFHEIGRCYLELKRYMEARDYGSRSLMAADDISDEKWQLNASVLMAQAELKLSNYKASVLHFERALERAKLLQDDSASEAIQKALCEARLRVTQ.

TPR repeat units lie at residues 14–47, 49–81, and 82–115; these read FTTYMAEGDQLFQRGEYVKAVESFTTALTLQPDD, NCLVSRSRCYVKLGDAENALKDAESSLKDNKNY, and FKGLYQKAEALYTMGDFEFALVYYHRGHKLRPEL. The tract at residues 153–180 is disordered; that stretch reads GVHPQNLNPSNKKESKKHSKKTDKGEKT. 4 TPR repeats span residues 314–347, 354–387, 391–424, and 431–464; these read GNLHSYIGNALMDLGNMDRALHHHEKDLELAKKC, SRALDNIGRVYARIGKFQQAIEVWEKKLPLACGG, AWLFHEIGRCYLELKRYMEARDYGSRSLMAADDI, and LNASVLMAQAELKLSNYKASVLHFERALERAKLL.

Component of the outer dynein arm-docking complex along with ODAD1, ODAD2 and ODAD3.

Its subcellular location is the cytoplasm. It is found in the cytoskeleton. The protein resides in the cilium axoneme. In terms of biological role, component of the outer dynein arm-docking complex (ODA-DC) that mediates outer dynein arms (ODA) binding onto the doublet microtubule. Plays an essential role for the assembly of ODA-DC and in the docking of ODA in ciliary axoneme. In Danio rerio (Zebrafish), this protein is Outer dynein arm-docking complex subunit 4 (odad4).